The sequence spans 239 residues: Peroxygenase (239 aa).

N-acetylglycine is present on glycine 2. Residues 60–95 form the EF-hand domain; that stretch reads HNMSVLQQRAAFFDRNNDGIVYPWETYQGFRAVGFG. Residues aspartate 73, asparagine 75, aspartate 77, and glutamate 84 each coordinate Ca(2+). Residues 116–125 carry the Proline-knot motif; the sequence is PSWIPSPVLS.

It belongs to the caleosin family. As to quaternary structure, homodimer. Heme b is required as a cofactor. It depends on Ca(2+) as a cofactor. In terms of tissue distribution, expressed in pollen (at protein level). Not expressed in leaf, root, stem, tepal, ovary, style, filament or stigma (at protein level).

It is found in the lipid droplet. The protein resides in the microsome membrane. The catalysed reaction is RH + ROOH = ROH + ROH.. In terms of biological role, calcium-binding peroxygenase involved in the degradation of storage lipid in oil bodies. This is Peroxygenase from Lilium longiflorum (Trumpet lily).